A 153-amino-acid chain; its full sequence is Ribonuclease H (153 aa).

Residues 1 to 141 form the RNase H type-1 domain; that stretch reads MKLVEIFTDG…CDELAKAGAN (141 aa). Residues Asp-9, Glu-47, Asp-69, and Asp-133 each contribute to the Mg(2+) site.

It belongs to the RNase H family. Monomer. Requires Mg(2+) as cofactor.

Its subcellular location is the cytoplasm. It catalyses the reaction Endonucleolytic cleavage to 5'-phosphomonoester.. Endonuclease that specifically degrades the RNA of RNA-DNA hybrids. This is Ribonuclease H from Actinobacillus pleuropneumoniae serotype 5b (strain L20).